Consider the following 239-residue polypeptide: 1-(5-phosphoribosyl)-5-[(5-phosphoribosylamino)methylideneamino] imidazole-4-carboxamide isomerase (239 aa).

The Proton acceptor role is filled by Asp8. Asp129 (proton donor) is an active-site residue.

The protein belongs to the HisA/HisF family.

Its subcellular location is the cytoplasm. It catalyses the reaction 1-(5-phospho-beta-D-ribosyl)-5-[(5-phospho-beta-D-ribosylamino)methylideneamino]imidazole-4-carboxamide = 5-[(5-phospho-1-deoxy-D-ribulos-1-ylimino)methylamino]-1-(5-phospho-beta-D-ribosyl)imidazole-4-carboxamide. It participates in amino-acid biosynthesis; L-histidine biosynthesis; L-histidine from 5-phospho-alpha-D-ribose 1-diphosphate: step 4/9. The chain is 1-(5-phosphoribosyl)-5-[(5-phosphoribosylamino)methylideneamino] imidazole-4-carboxamide isomerase from Pelagibacter ubique (strain HTCC1062).